Consider the following 132-residue polypeptide: Global transcriptional regulator Spx (132 aa).

Cys-10 and Cys-13 are joined by a disulfide.

This sequence belongs to the ArsC family. Spx subfamily. Interacts with the C-terminal domain of the alpha subunit of the RNAP.

The protein resides in the cytoplasm. Its function is as follows. Global transcriptional regulator that plays a key role in stress response and exerts either positive or negative regulation of genes. Acts by interacting with the C-terminal domain of the alpha subunit of the RNA polymerase (RNAP). This interaction can enhance binding of RNAP to the promoter region of target genes and stimulate their transcription, or block interaction of RNAP with activator. The chain is Global transcriptional regulator Spx from Lactiplantibacillus plantarum (strain ATCC BAA-793 / NCIMB 8826 / WCFS1) (Lactobacillus plantarum).